The chain runs to 33 residues: NVDFNSESTRRKKKQKEIVDLHNSLRRRVSPTA.

The segment at 1-33 (NVDFNSESTRRKKKQKEIVDLHNSLRRRVSPTA) is disordered. Over residues 24-33 (SLRRRVSPTA) the composition is skewed to basic residues.

This sequence belongs to the CRISP family. Contains 8 disulfide bonds. As to expression, expressed by the venom gland.

It is found in the secreted. In terms of biological role, blocks contraction of smooth muscle elicited by high potassium-induced depolarization, but does not block caffeine-stimulated contraction. May target voltage-gated calcium channels on smooth muscle (Cav). The sequence is that of Cysteine-rich venom protein from Naja naja (Indian cobra).